A 354-amino-acid chain; its full sequence is Short-chain dehydrogenase/reductase SAT2 (354 aa).

NADP(+)-binding residues include Ile31, Asp85, Arg201, and Val233.

Belongs to the short-chain dehydrogenases/reductases (SDR) family.

Its pathway is mycotoxin biosynthesis. Functionally, short-chain dehydrogenase/reductase; part of the satratoxin SC1 cluster involved in the biosynthesis of satratoxins, trichothecene mycotoxins that are associated with human food poisonings. Satratoxins are suggested to be made by products of multiple gene clusters (SC1, SC2 and SC3) that encode 21 proteins in all, including polyketide synthases, acetyltransferases, and other enzymes expected to modify the trichothecene skeleton. SC1 encodes 10 proteins, SAT1 to SAT10. The largest are SAT8, which encodes a putative polyketide synthase (PKS) with a conventional non-reducing architecture, and SAT10, a putative protein containing four ankyrin repeats and thus may be involved in protein scaffolding. The putative short-chain reductase SAT3 may assist the PKS in some capacity. SAT6 contains a secretory lipase domain and acts probably as a trichothecene esterase. SAT5 encodes a putative acetyltransferase, and so, with SAT6, may affect endogenous protection from toxicity. The probable transcription factor SAT9 may regulate the expression of the SC1 cluster. SC2 encodes proteins SAT11 to SAT16, the largest of which encodes the putative reducing PKS SAT13. SAT11 is a cytochrome P450 monooxygenase, while SAT14 and SAT16 are probable acetyltransferases. The SC2 cluster may be regulated by the transcription factor SAT15. SC3 is a small cluster that encodes 5 proteins, SAT17 to SAT21. SAT21 is a putative MFS-type transporter which may have a role in exporting secondary metabolites. The four other proteins putatively encoded in SC3 include the taurine hydroxylase-like protein SAT17, the O-methyltransferase SAT18, the acetyltransferase SAT19, and the Cys6-type zinc finger SAT20, the latter being probably involved in regulation of SC3 expression. The chain is Short-chain dehydrogenase/reductase SAT2 from Stachybotrys chartarum (strain CBS 109288 / IBT 7711) (Toxic black mold).